The following is a 953-amino-acid chain: MCNPEEAALLRLEEVFSATLAHVNSLVLQPLLPAAPDPSDPWGRECLRLLQQLHKSSQQLWEVTEESLHSLQERLRYPDSTGLESLLLLRGADRVLQAHIEYIESYTSCMVVQAFQKAAKRRSEYWRGQRKALRQLLSGVSSEGSVGASLGQALHQPLAHHVQQYVLLLLSLGDTIGEHHPTRELVVNAVTLFGNLQSFMKQELDQAVATQALWHTLRGRLRDVLCTPAHRLLQDSQDVPVTVAPLRAERVLLFDDALVLLQGHNVHTFDLKLVWVDPGQDGCTFHLLTPEEEFSFCAKDSQGQAVWQWKVTWAVHQALHGKKDFPVLGAGLEPSQPPDCRCAEYTFQAEGRLCQATYEGEWCRGRPHGKGTLKWPDGRNHVGNFCQGLEHGFGIRLLPQASEDKFDCYKCHWREGSMCGYGICEYSTDEVYKGYFQEGLRHGFGVLESGPQAPQPFRYTGHWERGQRSGYGIEEDGDRGERYIGMWQAGQRHGPGVMVTQAGVCYQGTFQADKTVGPGILLSEDDSLYEGTFTRDLTLMGKGKVTFPNGFTLEGSFGSGAGRGLHTQGVLDTAALPPDPSSTCKRQLGVGAFPVESRWQGVYSPFRDFVCAGCPRDLQEALLGFDVQSSRELRRSQDYLSCERTHPEDSVGSMEDILEELLQHREPKALQLYLRKALSNSLHPLGKLLRTLMLTFQATYAGVGANKHLQELAQEEVKQHAQELWAAYRGLLRVALERKGQALEEDEDTETRDLQVHGLVLPLMLPSFYSELFTLYLLLHEREDSFYSQGIANLSLFPDTQLLEFLDVQKHLWPLKDLTLTSNQRYSLVRDKCFLSATECLQKIMTTVDPREKLEVLERTYGEIEGTVSRVLGREYKLPMDDLLPLLIYVVSRARIQHLGAEIHLIRDMMDPNHTGGLYDFLLTALESCYEHIQKEDMRLHRLPGHWHSRELW.

MORN repeat units follow at residues 358 to 380, 381 to 403, 409 to 431, 432 to 452, 459 to 479, 483 to 505, 506 to 528, and 529 to 552; these read YEGE…DGRN, HVGN…QASE, YKCH…TDEV, YKGY…SGPQ, YTGH…DGDR, YIGM…AGVC, YQGT…DDSL, and YEGT…NGFT. One can recognise a VPS9 domain in the interval 796–942; the sequence is LFPDTQLLEF…IQKEDMRLHR (147 aa).

In terms of assembly, homodimer. Forms a heteromeric complex with ALS2. Interacts with ALS2 and RAB5A. As to expression, expressed in heart and kidney.

The protein resides in the cytoplasm. In terms of biological role, acts as a guanine nucleotide exchange factor (GEF) for Rab5 GTPase. Regulates the ALS2-mediated endosome dynamics. This chain is ALS2 C-terminal-like protein (ALS2CL), found in Homo sapiens (Human).